A 106-amino-acid chain; its full sequence is Iron-sulfur cluster assembly protein CyaY (106 aa).

The protein belongs to the frataxin family.

Functionally, involved in iron-sulfur (Fe-S) cluster assembly. May act as a regulator of Fe-S biogenesis. The protein is Iron-sulfur cluster assembly protein CyaY of Yersinia enterocolitica serotype O:8 / biotype 1B (strain NCTC 13174 / 8081).